We begin with the raw amino-acid sequence, 96 residues long: uncharacterized protein (96 aa).

Residues 9–86 (EELKSQAQVY…NKYADTVAER (78 aa)) are a coiled coil.

This sequence belongs to the WXG100 family. sagEsxA-like subfamily.

This is an uncharacterized protein from Clostridium acetobutylicum (strain ATCC 824 / DSM 792 / JCM 1419 / IAM 19013 / LMG 5710 / NBRC 13948 / NRRL B-527 / VKM B-1787 / 2291 / W).